Consider the following 39-residue polypeptide: Fructose 5-dehydrogenase [NADP(+)] (39 aa).

It catalyses the reaction D-fructose + NADP(+) = 5-dehydro-D-fructose + NADPH + H(+). This Erwinia citreus protein is Fructose 5-dehydrogenase [NADP(+)].